Consider the following 187-residue polypeptide: MLYSDKDIRVAIDAGELGIEPFDADLIQPSSIDVRMDRLFRVFNNSKYTHIDPKQQQDELTSLVEVPEGEPFVLHPGEFVLGSTLEKFTLPAHIAGRLEGKSSLGRLGLLTHSTAGFIDPGFSGYITLELSNVANLPITLWPGMKVGQLALFKMTSPAQAPYGSNVLGSKYQGQRGPTPSKAYLNFR.

Residues 101–106 (KSSLGR), Asp119, 127–129 (TLE), Gln148, Tyr162, Lys170, and Gln174 each bind dCTP. Residue Glu129 is the Proton donor/acceptor of the active site.

This sequence belongs to the dCTP deaminase family. As to quaternary structure, homotrimer.

It carries out the reaction dCTP + 2 H2O = dUMP + NH4(+) + diphosphate. It participates in pyrimidine metabolism; dUMP biosynthesis; dUMP from dCTP: step 1/1. Its function is as follows. Bifunctional enzyme that catalyzes both the deamination of dCTP to dUTP and the hydrolysis of dUTP to dUMP without releasing the toxic dUTP intermediate. The sequence is that of dCTP deaminase, dUMP-forming from Corynebacterium diphtheriae (strain ATCC 700971 / NCTC 13129 / Biotype gravis).